The primary structure comprises 101 residues: uncharacterized protein (101 aa).

A helical transmembrane segment spans residues 77 to 99 (VFSFMNGFTDGCICGTIIILCLI).

Its subcellular location is the membrane. This is an uncharacterized protein from Acanthamoeba polyphaga mimivirus (APMV).